The sequence spans 297 residues: Nitrogenase iron protein 2 (297 aa).

Gly14–Ser21 contacts ATP. Cys102 contacts [4Fe-4S] cluster. Arg105 carries the post-translational modification ADP-ribosylarginine; by dinitrogenase reductase ADP-ribosyltransferase. Cys136 lines the [4Fe-4S] cluster pocket.

It belongs to the NifH/BchL/ChlL family. In terms of assembly, homodimer. Requires [4Fe-4S] cluster as cofactor. The reversible ADP-ribosylation of Arg-105 inactivates the nitrogenase reductase and regulates nitrogenase activity.

The catalysed reaction is N2 + 8 reduced [2Fe-2S]-[ferredoxin] + 16 ATP + 16 H2O = H2 + 8 oxidized [2Fe-2S]-[ferredoxin] + 2 NH4(+) + 16 ADP + 16 phosphate + 6 H(+). Functionally, the key enzymatic reactions in nitrogen fixation are catalyzed by the nitrogenase complex, which has 2 components: the iron protein and the molybdenum-iron protein. This Nostoc sp. (strain PCC 7120 / SAG 25.82 / UTEX 2576) protein is Nitrogenase iron protein 2 (nifH2).